Here is a 155-residue protein sequence, read N- to C-terminus: 6,7-dimethyl-8-ribityllumazine synthase (155 aa).

5-amino-6-(D-ribitylamino)uracil-binding positions include tryptophan 18, 52–54, and 76–78; these read AFE and LVV. The active-site Proton donor is arginine 84. Residue serine 109 coordinates 5-amino-6-(D-ribitylamino)uracil. Histidine 123 provides a ligand contact to (2S)-2-hydroxy-3-oxobutyl phosphate.

Belongs to the DMRL synthase family.

The enzyme catalyses (2S)-2-hydroxy-3-oxobutyl phosphate + 5-amino-6-(D-ribitylamino)uracil = 6,7-dimethyl-8-(1-D-ribityl)lumazine + phosphate + 2 H2O + H(+). Its pathway is cofactor biosynthesis; riboflavin biosynthesis; riboflavin from 2-hydroxy-3-oxobutyl phosphate and 5-amino-6-(D-ribitylamino)uracil: step 1/2. Functionally, catalyzes the formation of 6,7-dimethyl-8-ribityllumazine by condensation of 5-amino-6-(D-ribitylamino)uracil with 3,4-dihydroxy-2-butanone 4-phosphate. This is the penultimate step in the biosynthesis of riboflavin. This Rhodococcus erythropolis (Arthrobacter picolinophilus) protein is 6,7-dimethyl-8-ribityllumazine synthase.